Consider the following 207-residue polypeptide: Lipid A acyltransferase PagP (207 aa).

Positions 1-24 (MKFDLTAACTLSATLLVSSGTVFA) are cleaved as a signal peptide. Residues histidine 79, aspartate 122, and serine 123 contribute to the active site.

Belongs to the lipid A palmitoyltransferase family. Homodimer.

The protein localises to the cell outer membrane. The enzyme catalyses a lipid A + a 1,2-diacyl-sn-glycero-3-phosphocholine = a hepta-acyl lipid A + a 2-acyl-sn-glycero-3-phosphocholine. The catalysed reaction is a lipid IVA + a 1,2-diacyl-sn-glycero-3-phosphocholine = a lipid IVB + a 2-acyl-sn-glycero-3-phosphocholine. It catalyses the reaction a lipid IIA + a 1,2-diacyl-sn-glycero-3-phosphocholine = a lipid IIB + a 2-acyl-sn-glycero-3-phosphocholine. Transfers a fatty acid residue from the sn-1 position of a phospholipid to the N-linked hydroxyfatty acid chain on the proximal unit of lipid A or its precursors. This chain is Lipid A acyltransferase PagP, found in Photorhabdus laumondii subsp. laumondii (strain DSM 15139 / CIP 105565 / TT01) (Photorhabdus luminescens subsp. laumondii).